The sequence spans 245 residues: Eukaryotic translation initiation factor 6 (245 aa).

This sequence belongs to the eIF-6 family. As to quaternary structure, monomer. Associates with the 60S ribosomal subunit.

The protein resides in the cytoplasm. It localises to the nucleus. Its subcellular location is the nucleolus. Binds to the 60S ribosomal subunit and prevents its association with the 40S ribosomal subunit to form the 80S initiation complex in the cytoplasm. May also be involved in ribosome biogenesis. This chain is Eukaryotic translation initiation factor 6 (eif6), found in Danio rerio (Zebrafish).